The sequence spans 91 residues: UPF0250 protein PFLU_5418 (91 aa).

This sequence belongs to the UPF0250 family.

In Pseudomonas fluorescens (strain SBW25), this protein is UPF0250 protein PFLU_5418.